A 259-amino-acid polypeptide reads, in one-letter code: MLSKRVIPCLDVRDGKLTKGIKFQGNVDIGDPVETARLYYEAGADELVFYDITASSEGRGIMLDVVDRVAREIFIPFSVGGGISTVEDMRAVLLAGAEKISVNSAAVKNPDIISLGAAAFGSQCVVVGMDVKHVGVSEQIPSGYEIVIHGGRKAMGLDALEWARTVEALGAGEICCNSIDADGAKTGYELTLTRMIAEAVTIPVIASGGAGNPDHMADAVTTGKASAALIASIVHYGEYSIKDCKDHMAKRGVKVRNIW.

Active-site residues include Asp-11 and Asp-130.

The protein belongs to the HisA/HisF family. As to quaternary structure, heterodimer of HisH and HisF.

It localises to the cytoplasm. It catalyses the reaction 5-[(5-phospho-1-deoxy-D-ribulos-1-ylimino)methylamino]-1-(5-phospho-beta-D-ribosyl)imidazole-4-carboxamide + L-glutamine = D-erythro-1-(imidazol-4-yl)glycerol 3-phosphate + 5-amino-1-(5-phospho-beta-D-ribosyl)imidazole-4-carboxamide + L-glutamate + H(+). It participates in amino-acid biosynthesis; L-histidine biosynthesis; L-histidine from 5-phospho-alpha-D-ribose 1-diphosphate: step 5/9. In terms of biological role, IGPS catalyzes the conversion of PRFAR and glutamine to IGP, AICAR and glutamate. The HisF subunit catalyzes the cyclization activity that produces IGP and AICAR from PRFAR using the ammonia provided by the HisH subunit. This chain is Imidazole glycerol phosphate synthase subunit HisF, found in Solidesulfovibrio magneticus (strain ATCC 700980 / DSM 13731 / RS-1) (Desulfovibrio magneticus).